Reading from the N-terminus, the 198-residue chain is Probable GTP-binding protein EngB (198 aa).

In terms of domain architecture, EngB-type G spans 22–195 (DLPEIALAGR…WKAIHKFTKT (174 aa)). GTP contacts are provided by residues 30–37 (GRSNVGKS), 57–61 (GKTQT), 75–78 (DVPG), 142–145 (TKAD), and 174–176 (FSS). Positions 37 and 59 each coordinate Mg(2+).

It belongs to the TRAFAC class TrmE-Era-EngA-EngB-Septin-like GTPase superfamily. EngB GTPase family. The cofactor is Mg(2+).

Its function is as follows. Necessary for normal cell division and for the maintenance of normal septation. The sequence is that of Probable GTP-binding protein EngB from Bacillus cereus (strain B4264).